The following is a 701-amino-acid chain: SH3 domain-binding protein 1 (701 aa).

Over residues 1–10 the composition is skewed to basic residues; it reads MMKRQLHRMR. Disordered stretches follow at residues 1–23 and 160–182; these read MMKR…RTPE and SQAT…HSHT. The segment at 1–275 is interaction with CGNL1; the sequence is MMKRQLHRMR…TATHFPRVYG (275 aa). The BAR domain occupies 17 to 262; it reads SLGRTPETAE…RENHGQADHS (246 aa). Serine 175, serine 241, serine 262, and serine 264 each carry phosphoserine. The Rho-GAP domain maps to 276–469; sequence VSLATHLQEL…ALIQSADTLF (194 aa). The segment at 470–701 is interaction with CD2AP; it reads PGDINFNVSG…RPRSLASETN (232 aa). The tract at residues 496–701 is disordered; sequence SEELPSTAVP…RPRSLASETN (206 aa). The segment covering 508–522 has biased composition (pro residues); it reads ATTPAPAPAPAPAPA. Phosphoserine occurs at positions 544 and 550. 2 stretches are compositionally biased toward pro residues: residues 570-579 and 587-596; these read PARPTMPPPQ and PPAPPLPPGS. Threonine 601 carries the phosphothreonine modification. Positions 616 to 625 match the SH3-binding motif; that stretch reads APTVPPPLPP. 2 stretches are compositionally biased toward pro residues: residues 618–630 and 641–652; these read TVPP…PPQP and SPSPASPGPASP. Position 626 is a phosphothreonine (threonine 626). At serine 653 the chain carries Phosphoserine. Low complexity predominate over residues 666–677; sequence GAATAEGGAPEA. Over residues 682 to 692 the composition is skewed to pro residues; the sequence is PTPPAIPPQPR.

As to quaternary structure, interacts with RAC1. Interacts with the exocyst via EXOC4 and EXOC8; required for the localization of both SH3BP1 and the exocyst to the leading edge of migrating cells. Interacts with CD2AP and CGNL1; probably part of a complex at cell junctions. Interacts with CAPZA1; recruits CAPZA1 to forming cell junctions. May interact with AFDN. Interacts with PLXND1; they dissociate upon SEMA3E binding to PLXND1 allowing SH3BP1 to transduce downstream signal through RAC1 inactivation. Interacts with ABL1, GRB2 and SRC (via SH3 domain).

It is found in the cell projection. It localises to the cell junction. The protein localises to the tight junction. The protein resides in the adherens junction. Its subcellular location is the phagocytic cup. It is found in the nucleus. It localises to the cytoplasm. The protein localises to the cytosol. Functionally, GTPase activating protein (GAP) which specifically converts GTP-bound Rho-type GTPases including RAC1 and CDC42 in their inactive GDP-bound form. By specifically inactivating RAC1 at the leading edge of migrating cells, it regulates the spatiotemporal organization of cell protrusions which is important for proper cell migration. Also negatively regulates CDC42 in the process of actin remodeling and the formation of epithelial cell junctions. Through its GAP activity toward RAC1 and/or CDC42 plays a specific role in phagocytosis of large particles. Specifically recruited by a PI3 kinase/PI3K-dependent mechanism to sites of large particles engagement, inactivates RAC1 and/or CDC42 allowing the reorganization of the underlying actin cytoskeleton required for engulfment. It also plays a role in angiogenesis and the process of repulsive guidance as part of a semaphorin-plexin signaling pathway. Following the binding of PLXND1 to extracellular SEMA3E it dissociates from PLXND1 and inactivates RAC1, inducing the intracellular reorganization of the actin cytoskeleton and the collapse of cells. This Homo sapiens (Human) protein is SH3 domain-binding protein 1.